Reading from the N-terminus, the 451-residue chain is Probable plasmid replicative DNA helicase (451 aa).

Residues 194–451 (NDSFYDGLPT…SKFSAIKKVW (258 aa)) form the SF4 helicase domain. Residue 225–232 (ARPSIGKT) participates in ATP binding.

Belongs to the helicase family. DnaB subfamily. As to quaternary structure, homohexamer.

It catalyses the reaction Couples ATP hydrolysis with the unwinding of duplex DNA at the replication fork by translocating in the 5'-3' direction. This creates two antiparallel DNA single strands (ssDNA). The leading ssDNA polymer is the template for DNA polymerase III holoenzyme which synthesizes a continuous strand.. It carries out the reaction ATP + H2O = ADP + phosphate + H(+). A replicative DNA helicase, it participates in initiation and elongation during DNA replication. Travels ahead of the DNA replisome, separating dsDNA into templates for DNA synthesis. A processive ATP-dependent 5'-3' DNA helicase it has DNA-dependent ATPase activity. This chain is Probable plasmid replicative DNA helicase, found in Chlamydia muridarum (strain MoPn / Nigg).